The following is a 253-amino-acid chain: 5-oxoprolinase subunit A (253 aa).

The protein belongs to the LamB/PxpA family. In terms of assembly, forms a complex composed of PxpA, PxpB and PxpC.

It catalyses the reaction 5-oxo-L-proline + ATP + 2 H2O = L-glutamate + ADP + phosphate + H(+). Functionally, catalyzes the cleavage of 5-oxoproline to form L-glutamate coupled to the hydrolysis of ATP to ADP and inorganic phosphate. The chain is 5-oxoprolinase subunit A from Bacillus anthracis (strain CDC 684 / NRRL 3495).